We begin with the raw amino-acid sequence, 237 residues long: Phosphoribosylaminoimidazole-succinocarboxamide synthase (237 aa).

The protein belongs to the SAICAR synthetase family.

It catalyses the reaction 5-amino-1-(5-phospho-D-ribosyl)imidazole-4-carboxylate + L-aspartate + ATP = (2S)-2-[5-amino-1-(5-phospho-beta-D-ribosyl)imidazole-4-carboxamido]succinate + ADP + phosphate + 2 H(+). It functions in the pathway purine metabolism; IMP biosynthesis via de novo pathway; 5-amino-1-(5-phospho-D-ribosyl)imidazole-4-carboxamide from 5-amino-1-(5-phospho-D-ribosyl)imidazole-4-carboxylate: step 1/2. This is Phosphoribosylaminoimidazole-succinocarboxamide synthase from Yersinia enterocolitica serotype O:8 / biotype 1B (strain NCTC 13174 / 8081).